The primary structure comprises 30 residues: U1-poneritoxin-Ni3a (30 aa).

It belongs to the ponericin-G family. In terms of tissue distribution, expressed by the venom gland.

It localises to the secreted. Functionally, shows a broad spectrum of activity against both Gram-positive and Gram-negative bacteria. Also has antimicrobial activity against S.cerevisiae. Has insecticidal and non-hemolytic activity. This Neoponera inversa (Ant) protein is U1-poneritoxin-Ni3a.